A 60-amino-acid polypeptide reads, in one-letter code: MAKLLVKQVRSKINCPLSQKRGLEALGLRKLGQVVEHESNPAILGMINKVKHLVSVEEAK.

Belongs to the universal ribosomal protein uL30 family. Part of the 50S ribosomal subunit.

This is Large ribosomal subunit protein uL30 from Flavobacterium johnsoniae (strain ATCC 17061 / DSM 2064 / JCM 8514 / BCRC 14874 / CCUG 350202 / NBRC 14942 / NCIMB 11054 / UW101) (Cytophaga johnsonae).